Reading from the N-terminus, the 364-residue chain is tRNA 2-selenouridine synthase (364 aa).

The region spanning leucine 14–tryptophan 137 is the Rhodanese domain. Cysteine 97 functions as the S-selanylcysteine intermediate in the catalytic mechanism. Glycine 149 provides a ligand contact to (2E)-geranyl diphosphate.

This sequence belongs to the SelU family. Monomer.

It catalyses the reaction 5-methylaminomethyl-2-thiouridine(34) in tRNA + selenophosphate + (2E)-geranyl diphosphate + H2O + H(+) = 5-methylaminomethyl-2-selenouridine(34) in tRNA + (2E)-thiogeraniol + phosphate + diphosphate. The catalysed reaction is 5-methylaminomethyl-2-thiouridine(34) in tRNA + (2E)-geranyl diphosphate = 5-methylaminomethyl-S-(2E)-geranyl-thiouridine(34) in tRNA + diphosphate. The enzyme catalyses 5-methylaminomethyl-S-(2E)-geranyl-thiouridine(34) in tRNA + selenophosphate + H(+) = 5-methylaminomethyl-2-(Se-phospho)selenouridine(34) in tRNA + (2E)-thiogeraniol. It carries out the reaction 5-methylaminomethyl-2-(Se-phospho)selenouridine(34) in tRNA + H2O = 5-methylaminomethyl-2-selenouridine(34) in tRNA + phosphate. Its function is as follows. Involved in the post-transcriptional modification of the uridine at the wobble position (U34) of tRNA(Lys), tRNA(Glu) and tRNA(Gln). Catalyzes the conversion of 2-thiouridine (S2U-RNA) to 2-selenouridine (Se2U-RNA). Acts in a two-step process involving geranylation of 2-thiouridine (S2U) to S-geranyl-2-thiouridine (geS2U) and subsequent selenation of the latter derivative to 2-selenouridine (Se2U) in the tRNA chain. The protein is tRNA 2-selenouridine synthase of Salmonella typhimurium (strain LT2 / SGSC1412 / ATCC 700720).